Consider the following 264-residue polypeptide: Small ribosomal subunit protein uS2 (264 aa).

Positions 228-264 (HEDVSAGPVEEQSDEAQAAEQGTEGDTAQLTSSQGRS) are disordered. Polar residues predominate over residues 251–264 (EGDTAQLTSSQGRS).

The protein belongs to the universal ribosomal protein uS2 family.

The sequence is that of Small ribosomal subunit protein uS2 from Deinococcus radiodurans (strain ATCC 13939 / DSM 20539 / JCM 16871 / CCUG 27074 / LMG 4051 / NBRC 15346 / NCIMB 9279 / VKM B-1422 / R1).